A 168-amino-acid polypeptide reads, in one-letter code: Large ribosomal subunit protein uL10 (168 aa).

It belongs to the universal ribosomal protein uL10 family. In terms of assembly, part of the ribosomal stalk of the 50S ribosomal subunit. The N-terminus interacts with L11 and the large rRNA to form the base of the stalk. The C-terminus forms an elongated spine to which L12 dimers bind in a sequential fashion forming a multimeric L10(L12)X complex.

In terms of biological role, forms part of the ribosomal stalk, playing a central role in the interaction of the ribosome with GTP-bound translation factors. This Laribacter hongkongensis (strain HLHK9) protein is Large ribosomal subunit protein uL10.